The chain runs to 52 residues: Insulin (52 aa).

3 cysteine pairs are disulfide-bonded: Cys-7/Cys-38, Cys-19/Cys-51, and Cys-37/Cys-42.

It belongs to the insulin family. As to quaternary structure, heterodimer of a B chain and an A chain linked by two disulfide bonds.

The protein resides in the secreted. Its function is as follows. Insulin decreases blood glucose concentration. It increases cell permeability to monosaccharides, amino acids and fatty acids. It accelerates glycolysis, the pentose phosphate cycle, and glycogen synthesis in liver. The polypeptide is Insulin (ins) (Atractosteus spatula (Alligator gar)).